Here is a 291-residue protein sequence, read N- to C-terminus: Glycine--tRNA ligase alpha subunit (291 aa).

Belongs to the class-II aminoacyl-tRNA synthetase family. Tetramer of two alpha and two beta subunits.

It is found in the cytoplasm. The enzyme catalyses tRNA(Gly) + glycine + ATP = glycyl-tRNA(Gly) + AMP + diphosphate. This is Glycine--tRNA ligase alpha subunit from Geobacter metallireducens (strain ATCC 53774 / DSM 7210 / GS-15).